A 470-amino-acid polypeptide reads, in one-letter code: uncharacterized protein (470 aa).

An N-terminal signal peptide occupies residues Met1 to Tyr24.

This is an uncharacterized protein from Mycoplasma capricolum subsp. capricolum (strain California kid / ATCC 27343 / NCTC 10154).